We begin with the raw amino-acid sequence, 157 residues long: Protein MG115 homolog (157 aa).

Belongs to the CinA family.

The polypeptide is Protein MG115 homolog (Mycoplasma pneumoniae (strain ATCC 29342 / M129 / Subtype 1) (Mycoplasmoides pneumoniae)).